Consider the following 286-residue polypeptide: Pantothenate synthetase (286 aa).

30–37 lines the ATP pocket; sequence MGNLHSGH. His37 acts as the Proton donor in catalysis. Gln61 provides a ligand contact to (R)-pantoate. Position 61 (Gln61) interacts with beta-alanine. 149–152 contributes to the ATP binding site; sequence GQKD. Gln155 provides a ligand contact to (R)-pantoate. Residues Val178 and 186–189 each bind ATP; that span reads LSSR.

It belongs to the pantothenate synthetase family. Homodimer.

The protein resides in the cytoplasm. The catalysed reaction is (R)-pantoate + beta-alanine + ATP = (R)-pantothenate + AMP + diphosphate + H(+). Its pathway is cofactor biosynthesis; (R)-pantothenate biosynthesis; (R)-pantothenate from (R)-pantoate and beta-alanine: step 1/1. Its function is as follows. Catalyzes the condensation of pantoate with beta-alanine in an ATP-dependent reaction via a pantoyl-adenylate intermediate. This is Pantothenate synthetase from Pseudomonas fluorescens (strain Pf0-1).